The chain runs to 902 residues: Adhesion G-protein coupled receptor D1 (902 aa).

An N-terminal signal peptide occupies residues 1 to 25 (MKKLLPLCCWHSWLLLFYCDFQVRG). Residues 26–598 (AHTRSHVHPG…GHQVALSSIS (573 aa)) are Extracellular-facing. N-linked (GlcNAc...) asparagine glycosylation is found at N68, N76, N83, N89, N121, N183, N217, N310, N330, N337, N347, N422, N504, N529, and N561. In terms of domain architecture, Pentraxin (PTX) spans 111–304 (KGVTFLYYRK…VNTMAPTNAY (194 aa)). The GAIN-B domain occupies 399–585 (QVAIVGSSSM…AILMQVVPLE (187 aa)). 2 disulfides stabilise this stretch: C538–C567 and C555–C569. A GPS region spans residues 538–585 (CAFLDFSSGEGIWSNQGCALTEGNLSYSICRCTHLTNFAILMQVVPLE). The stachel stretch occupies residues 574-582 (NFAILMQVV). Q591 is a 17beta-hydroxy-5alpha-androstan-3-one binding site. Residues 599-619 (YIGCSLSVLCLAITLVTFAVL) traverse the membrane as a helical segment. Over 620 to 630 (SSVSTIRNQRY) the chain is Cytoplasmic. A helical transmembrane segment spans residues 631–651 (HIHANLSCAVLVAQVLLLISF). The Extracellular segment spans residues 652-661 (RFEPGTAPCQ). Residues C660 and C732 are joined by a disulfide bond. The helical transmembrane segment at 662 to 682 (VLAMLLHYFFLSAFAWMLVEG) threads the bilayer. The Cytoplasmic portion of the chain corresponds to 683–702 (LHLYSMVIKVFGSEDSKHRY). The helical transmembrane segment at 703 to 723 (YYGIGWGFPLLICIISIVFAM) threads the bilayer. Over 724-739 (DSYGTSKNCWLSLGNG) the chain is Extracellular. A helical transmembrane segment spans residues 740–760 (AIWAFVAPALFIIVVNIGILI). Residues 761-788 (AVTRVISQISAENYKIHGDPSAFKLTAK) are Cytoplasmic-facing. A helical transmembrane segment spans residues 789 to 809 (AVAVLLPILGTSWVFGVLAVN). Topologically, residues 810–812 (NQA) are extracellular. The chain crosses the membrane as a helical span at residues 813–833 (MVFQYMFAILNSLQGFFIFLF). Residues 834-902 (HCLLNSEVRA…SGHRVDLSAV (69 aa)) lie on the Cytoplasmic side of the membrane. The tract at residues 865 to 902 (KPFSSDIMNGTRPATGSTRLSPWDKSSHSGHRVDLSAV) is disordered. Positions 870–884 (DIMNGTRPATGSTRL) are enriched in polar residues. Over residues 889 to 902 (KSSHSGHRVDLSAV) the composition is skewed to basic and acidic residues.

It belongs to the G-protein coupled receptor 2 family. Adhesion G-protein coupled receptor (ADGR) subfamily. In terms of assembly, heterodimer of 2 chains generated by proteolytic processing; the large extracellular N-terminal fragment and the membrane-bound C-terminal fragment predominantly remain associated and non-covalently linked. Interacts with ESYT1; interaction takes place in absence of cytosolic calcium and inhibits the G protein-coupled receptor activity of ADGRD1. In terms of processing, autoproteolytically processed at the GPS region of the GAIN-B domain; this cleavage modulates receptor activity. Cleavage takes place early in the secretory pathway before N-glycosylation.

The protein resides in the cell membrane. Its activity is regulated as follows. Forms a heterodimer of 2 chains generated by proteolytic processing that remain associated through non-covalent interactions mediated by the GAIN-B domain. In the inactivated receptor, the Stachel sequence (also named stalk) is embedded in the GAIN-B domain, where it adopts a beta-strand conformation. On activation, the Stachel moves into the 7 transmembrane region and adopts a twisted hook-shaped configuration that forms contacts within the receptor, leading to coupling of a G-alpha protein, which activates signaling. The cleaved GAIN-B and N-terminal domains can then dissociate from the rest of the receptor. Interaction with ESYT1 in absence of cytosolic calcium inhibits the G protein-coupled receptor activity; interaction and inhibition is relieved when cytosolic calcium increases. In terms of biological role, adhesion G-protein coupled receptor (aGPCR) for androgen hormone 5alpha-dihydrotestosterone (5alpha-DHT), also named 17beta-hydroxy-5alpha-androstan-3-one, the most potent hormone among androgens. Also activated by methenolone drug. Ligand binding causes a conformation change that triggers signaling via guanine nucleotide-binding proteins (G proteins) and modulates the activity of downstream effectors, such as adenylate cyclase. ADGRD1 is coupled to G(s) G proteins and mediates activation of adenylate cyclase activity. Acts as a 5alpha-DHT receptor in muscle cells, thereby increasing intracellular cyclic AMP (cAMP) levels and enhancing muscle strength. The chain is Adhesion G-protein coupled receptor D1 (ADGRD1) from Bos taurus (Bovine).